The following is a 488-amino-acid chain: Kelch-like protein 15 (488 aa).

Residues 31 to 98 (LDVTLVIEDH…MYYGTIELSM (68 aa)) form the BTB domain. Residues 133–237 (CAEIMRLLDD…TPSSVFEKVK (105 aa)) form the BACK domain. Kelch repeat units lie at residues 328–379 (FVFL…VIGR), 381–426 (VYAV…VLGN), and 428–473 (LYIT…NKCK).

In terms of assembly, homodimer. Interacts with CUL3.

It localises to the nucleus. The protein operates within protein modification; protein ubiquitination. Functionally, substrate-specific adapter for CUL3 E3 ubiquitin-protein ligase complex. The protein is Kelch-like protein 15 (KLHL15) of Gallus gallus (Chicken).